The primary structure comprises 515 residues: Bifunctional purine biosynthesis protein PurH (515 aa).

The MGS-like domain occupies M1–V145.

It belongs to the PurH family.

It catalyses the reaction (6R)-10-formyltetrahydrofolate + 5-amino-1-(5-phospho-beta-D-ribosyl)imidazole-4-carboxamide = 5-formamido-1-(5-phospho-D-ribosyl)imidazole-4-carboxamide + (6S)-5,6,7,8-tetrahydrofolate. The enzyme catalyses IMP + H2O = 5-formamido-1-(5-phospho-D-ribosyl)imidazole-4-carboxamide. The protein operates within purine metabolism; IMP biosynthesis via de novo pathway; 5-formamido-1-(5-phospho-D-ribosyl)imidazole-4-carboxamide from 5-amino-1-(5-phospho-D-ribosyl)imidazole-4-carboxamide (10-formyl THF route): step 1/1. Its pathway is purine metabolism; IMP biosynthesis via de novo pathway; IMP from 5-formamido-1-(5-phospho-D-ribosyl)imidazole-4-carboxamide: step 1/1. In Streptococcus pneumoniae (strain 70585), this protein is Bifunctional purine biosynthesis protein PurH.